Here is a 50-residue protein sequence, read N- to C-terminus: Large ribosomal subunit protein eL39 (50 aa).

The protein belongs to the eukaryotic ribosomal protein eL39 family. In terms of assembly, part of the 50S ribosomal subunit. Interacts weakly with protein L23.

Binds to the 23S rRNA. Forms part of the polypeptide exit tunnel. The protein is Large ribosomal subunit protein eL39 (rpl39e) of Haloarcula marismortui (strain ATCC 43049 / DSM 3752 / JCM 8966 / VKM B-1809) (Halobacterium marismortui).